Reading from the N-terminus, the 140-residue chain is uncharacterized protein (140 aa).

N-linked (GlcNAc...) asparagine glycosylation is present at N36. The chain crosses the membrane as a helical span at residues L91–F107. Over residues Q113–N122 the composition is skewed to polar residues. The disordered stretch occupies residues Q113–Q140. Residues T131–Q140 show a composition bias toward acidic residues.

Its subcellular location is the endoplasmic reticulum membrane. This is an uncharacterized protein from Saccharomyces cerevisiae (strain ATCC 204508 / S288c) (Baker's yeast).